A 627-amino-acid chain; its full sequence is tRNA uridine 5-carboxymethylaminomethyl modification enzyme MnmG (627 aa).

FAD is bound by residues glycine 13–glycine 18, valine 125, and serine 180. Position 274 to 288 (glycine 274 to phenylalanine 288) interacts with NAD(+). Glutamine 371 lines the FAD pocket.

Belongs to the MnmG family. Homodimer. Heterotetramer of two MnmE and two MnmG subunits. FAD serves as cofactor.

The protein resides in the cytoplasm. Functionally, NAD-binding protein involved in the addition of a carboxymethylaminomethyl (cmnm) group at the wobble position (U34) of certain tRNAs, forming tRNA-cmnm(5)s(2)U34. The chain is tRNA uridine 5-carboxymethylaminomethyl modification enzyme MnmG from Francisella philomiragia subsp. philomiragia (strain ATCC 25017 / CCUG 19701 / FSC 153 / O#319-036).